The chain runs to 437 residues: GTPase Der (437 aa).

EngA-type G domains lie at 3-168 (PLIA…PCPE) and 178-353 (IKLA…LNRR). GTP contacts are provided by residues 9–16 (GRPNVGKS), 56–60 (DTGGY), 120–123 (NKVD), 184–191 (GRPNVGKS), 231–235 (DTAGL), and 296–299 (NKWD). The KH-like domain maps to 354–437 (QKISTSNLNR…IPITMRFLRK (84 aa)).

It belongs to the TRAFAC class TrmE-Era-EngA-EngB-Septin-like GTPase superfamily. EngA (Der) GTPase family. As to quaternary structure, associates with the 50S ribosomal subunit.

GTPase that plays an essential role in the late steps of ribosome biogenesis. The polypeptide is GTPase Der (Chlorobaculum tepidum (strain ATCC 49652 / DSM 12025 / NBRC 103806 / TLS) (Chlorobium tepidum)).